A 98-amino-acid chain; its full sequence is Integration host factor subunit beta (98 aa).

The protein belongs to the bacterial histone-like protein family. In terms of assembly, heterodimer of an alpha and a beta chain.

This protein is one of the two subunits of integration host factor, a specific DNA-binding protein that functions in genetic recombination as well as in transcriptional and translational control. This chain is Integration host factor subunit beta, found in Gluconacetobacter diazotrophicus (strain ATCC 49037 / DSM 5601 / CCUG 37298 / CIP 103539 / LMG 7603 / PAl5).